Here is a 490-residue protein sequence, read N- to C-terminus: Cysteine--tRNA ligase (490 aa).

A Zn(2+)-binding site is contributed by C31. Positions P33–H43 match the 'HIGH' region motif. 3 residues coordinate Zn(2+): C226, H251, and E255. Positions K283–S287 match the 'KMSKS' region motif. ATP is bound at residue K286.

It belongs to the class-I aminoacyl-tRNA synthetase family. Monomer. Requires Zn(2+) as cofactor.

Its subcellular location is the cytoplasm. It carries out the reaction tRNA(Cys) + L-cysteine + ATP = L-cysteinyl-tRNA(Cys) + AMP + diphosphate. This is Cysteine--tRNA ligase from Porphyromonas gingivalis (strain ATCC BAA-308 / W83).